A 107-amino-acid polypeptide reads, in one-letter code: Sperm-specific class P protein 31 (107 aa).

In terms of domain architecture, MSP spans 1-107 (MINIDPPSGD…GEVVVKMVAS (107 aa)).

As to expression, expressed at higher level in testis.

The chain is Sperm-specific class P protein 31 (ssp-31) from Caenorhabditis elegans.